Reading from the N-terminus, the 922-residue chain is NEDD4-like E3 ubiquitin-protein ligase WWP1 (922 aa).

The 116-residue stretch at 1–116 (MATASPRSDT…IHNRKLERVK (116 aa)) folds into the C2 domain. Polar residues-rich tracts occupy residues 210–219 (GDNTPSSPSQ), 243–278 (NGES…STTV), 286–302 (ILTS…TSAE), 314–323 (DTSNSRSSSA), and 340–351 (RQQSGNANTETL). The tract at residues 210-388 (GDNTPSSPSQ…RPQPLPPGWE (179 aa)) is disordered. WW domains lie at 349 to 382 (ETLP…RPQP), 381 to 414 (QPLP…RPTM), 456 to 489 (GPLP…DPRT), and 496 to 529 (EPLP…DPRN). Residues 349-531 (ETLPSGWEQR…TTFKDPRNGK (183 aa)) form a required for interaction with and ubiquitination of AMOTL2. Required for interaction with YAP1 region. An HECT domain is found at 588-922 (KPYDLRRRLY…IEETEGFGQE (335 aa)). The active-site Glycyl thioester intermediate is C890.

As to quaternary structure, interacts with the Crumbs complex components PALS1 and PATJ; interaction with the Crumbs complex is enhanced by WWP1's interaction with AMOTL2 and facilitates WWP1 localization to the plasma membrane. Interaction with the Crumbs complex promotes WWP1 monoubiquitination of AMOTL2, which activates the Hippo signaling pathway. Binds KLF2 and HIVEP3. Binds SCNN1A, SCNN1B, SCNN1G, WBP1, WBP2, DRPLA and adenovirus type 2 PIII. Interacts with RNF11. Interacts with SPART. Interacts with ERBB4 isoforms JM-B CYT-1 and JM-A CYT-1. Interacts with SMAD1, SMAD2, SMAD3, SMAD5, SMAD6, SMAD7, TGFBR1 and TGFBR2. Associates with the TGFBR1:TGFBR2 receptor complex in presence of SMAD7. Interacts with SKIL isoform 1. Interacts with TP63 isoform 1 and isoform 2. Interacts with STAMBP and RNF11. Interacts with NDFIP1 and NDFIP2; this interaction activates the E3 ubiquitin-protein ligase. Interacts with TGIF. Interacts (via WW domains) with ARRDC1, ARRDC2 and ARRDC3. (Microbial infection) Interacts with HTLV-1 protein Gag. In terms of assembly, (Microbial infection) Interacts with ebola virus protein VP40. Auto-ubiquitinated and ubiquitinated by RNF11. As to expression, detected in heart, placenta, pancreas, kidney, liver, skeletal muscle, bone marrow, fetal brain, and at much lower levels in adult brain and lung. Isoform 1 and isoform 5 predominate in all tissues tested, except in testis and bone marrow, where isoform 5 is expressed at much higher levels than isoform 1.

Its subcellular location is the cytoplasm. The protein localises to the cell membrane. It is found in the nucleus. The protein resides in the cell junction. The catalysed reaction is S-ubiquitinyl-[E2 ubiquitin-conjugating enzyme]-L-cysteine + [acceptor protein]-L-lysine = [E2 ubiquitin-conjugating enzyme]-L-cysteine + N(6)-ubiquitinyl-[acceptor protein]-L-lysine.. It functions in the pathway protein modification; protein ubiquitination. Its activity is regulated as follows. Activated by NDFIP1- and NDFIP2-binding. Functionally, E3 ubiquitin-protein ligase which accepts ubiquitin from an E2 ubiquitin-conjugating enzyme in the form of a thioester and then directly transfers the ubiquitin to targeted substrates. Ubiquitinates ERBB4 isoforms JM-A CYT-1 and JM-B CYT-1, KLF2, KLF5 and TP63 and promotes their proteasomal degradation. Ubiquitinates RNF11 without targeting it for degradation. Ubiquitinates and promotes degradation of TGFBR1; the ubiquitination is enhanced by SMAD7. Ubiquitinates SMAD6 and SMAD7. Ubiquitinates and promotes degradation of SMAD2 in response to TGF-beta signaling, which requires interaction with TGIF. Activates the Hippo signaling pathway in response to cell contact inhibition and recruitment to the Crumbs complex at the cell membrane. Monoubiquitinates AMOTL2 which facilitates its interaction with and activation of LATS2. LATS2 then phosphorylates YAP1, excluding it from the nucleus and therefore ultimately represses YAP1-driven transcription of target genes. The protein is NEDD4-like E3 ubiquitin-protein ligase WWP1 (WWP1) of Homo sapiens (Human).